The sequence spans 580 residues: FAD-dependent monooxygenase yanF (580 aa).

The interval 1 to 21 is disordered; the sequence is MSSSAECRPIGWGGWGPDPNT. The FAD-binding PCMH-type domain maps to 150 to 322; sequence CRLNASCIVT…VEYDLTTNTG (173 aa). Position 187 is a pros-8alpha-FAD histidine (His-187).

This sequence belongs to the oxygen-dependent FAD-linked oxidoreductase family.

Its pathway is secondary metabolite biosynthesis; terpenoid biosynthesis. In terms of biological role, FAD-dependent monooxygenase; part of the gene cluster that mediates the biosynthesis of yanuthone D, a fungal isoprenoid epoxycyclohexenone that acts as an antibiotic against fungi and bacteria. The first step of the pathway is the synthesis of 6-methylsalicylic acid (6-MSA) by the polyketide synthase yanA. 6-MSA is then converted to m-cresol by the decarboxylase yanB. The cytochrome P450 monooxygenase yanC then catalyzes the oxidation of m-cresol to toluquinol. Epoxidation of toluquinol is then performed by the short chain dehydrogenase yanD, with the help of yanE, and a further prenylated by yanG leads to 7-deacetoxyyanuthone A. The next step is the hydroxylation of C-22 of 7-deacetoxyyanuthone A by the cytochrome P450 monooxygenase yanH to yield 22-deacetylyanuthone A. O-Mevalon transferase yanI then attaches mevalon to the hydroxyl group of 22-deacetylyanuthone A to produce yanuthone E. Finally, the FAD-dependent monooxygenase yanF oxidizes the hydroxyl group at C15 of yanuthone E to form yanuthone D. Furthermore, several branching points in the pathway lead to the production of yanuthones F and G from 7-deacetoxyyanuthone A; yanuthones H and I from 22-deacetylyanuthone A; and yanuthone J from yanuthone E. The polypeptide is FAD-dependent monooxygenase yanF (Aspergillus niger (strain ATCC 1015 / CBS 113.46 / FGSC A1144 / LSHB Ac4 / NCTC 3858a / NRRL 328 / USDA 3528.7)).